The sequence spans 266 residues: 3-methyl-2-oxobutanoate hydroxymethyltransferase (266 aa).

Aspartate 45 and aspartate 84 together coordinate Mg(2+). Residues 45–46 (DS), aspartate 84, and lysine 112 each bind 3-methyl-2-oxobutanoate. Glutamate 114 provides a ligand contact to Mg(2+). The active-site Proton acceptor is the glutamate 181.

The protein belongs to the PanB family. In terms of assembly, homodecamer; pentamer of dimers. Requires Mg(2+) as cofactor.

The protein resides in the cytoplasm. It carries out the reaction 3-methyl-2-oxobutanoate + (6R)-5,10-methylene-5,6,7,8-tetrahydrofolate + H2O = 2-dehydropantoate + (6S)-5,6,7,8-tetrahydrofolate. Its pathway is cofactor biosynthesis; (R)-pantothenate biosynthesis; (R)-pantoate from 3-methyl-2-oxobutanoate: step 1/2. Functionally, catalyzes the reversible reaction in which hydroxymethyl group from 5,10-methylenetetrahydrofolate is transferred onto alpha-ketoisovalerate to form ketopantoate. The sequence is that of 3-methyl-2-oxobutanoate hydroxymethyltransferase from Pseudomonas putida (strain ATCC 700007 / DSM 6899 / JCM 31910 / BCRC 17059 / LMG 24140 / F1).